Here is a 130-residue protein sequence, read N- to C-terminus: Phosphoribosyl-AMP cyclohydrolase (130 aa).

Residue Asp77 coordinates Mg(2+). Cys78 contacts Zn(2+). Asp79 and Asp81 together coordinate Mg(2+). Positions 95 and 102 each coordinate Zn(2+).

This sequence belongs to the PRA-CH family. As to quaternary structure, homodimer. Requires Mg(2+) as cofactor. Zn(2+) serves as cofactor.

It is found in the cytoplasm. It carries out the reaction 1-(5-phospho-beta-D-ribosyl)-5'-AMP + H2O = 1-(5-phospho-beta-D-ribosyl)-5-[(5-phospho-beta-D-ribosylamino)methylideneamino]imidazole-4-carboxamide. It participates in amino-acid biosynthesis; L-histidine biosynthesis; L-histidine from 5-phospho-alpha-D-ribose 1-diphosphate: step 3/9. Its function is as follows. Catalyzes the hydrolysis of the adenine ring of phosphoribosyl-AMP. The sequence is that of Phosphoribosyl-AMP cyclohydrolase from Pseudomonas putida (strain W619).